The following is a 202-amino-acid chain: Nucleoside triphosphate pyrophosphatase (202 aa).

Catalysis depends on Asp-79, which acts as the Proton acceptor.

This sequence belongs to the Maf family. It depends on a divalent metal cation as a cofactor.

Its subcellular location is the cytoplasm. It catalyses the reaction a ribonucleoside 5'-triphosphate + H2O = a ribonucleoside 5'-phosphate + diphosphate + H(+). It carries out the reaction a 2'-deoxyribonucleoside 5'-triphosphate + H2O = a 2'-deoxyribonucleoside 5'-phosphate + diphosphate + H(+). Its function is as follows. Nucleoside triphosphate pyrophosphatase. May have a dual role in cell division arrest and in preventing the incorporation of modified nucleotides into cellular nucleic acids. The protein is Nucleoside triphosphate pyrophosphatase of Rhodopseudomonas palustris (strain ATCC BAA-98 / CGA009).